The chain runs to 105 residues: Small ribosomal subunit protein uS10 (105 aa).

It belongs to the universal ribosomal protein uS10 family. Part of the 30S ribosomal subunit.

In terms of biological role, involved in the binding of tRNA to the ribosomes. The protein is Small ribosomal subunit protein uS10 of Bdellovibrio bacteriovorus (strain ATCC 15356 / DSM 50701 / NCIMB 9529 / HD100).